We begin with the raw amino-acid sequence, 229 residues long: Biosynthetic peptidoglycan transglycosylase (229 aa).

The helical transmembrane segment at Phe-14–Leu-34 threads the bilayer.

Belongs to the glycosyltransferase 51 family.

The protein localises to the cell inner membrane. The enzyme catalyses [GlcNAc-(1-&gt;4)-Mur2Ac(oyl-L-Ala-gamma-D-Glu-L-Lys-D-Ala-D-Ala)](n)-di-trans,octa-cis-undecaprenyl diphosphate + beta-D-GlcNAc-(1-&gt;4)-Mur2Ac(oyl-L-Ala-gamma-D-Glu-L-Lys-D-Ala-D-Ala)-di-trans,octa-cis-undecaprenyl diphosphate = [GlcNAc-(1-&gt;4)-Mur2Ac(oyl-L-Ala-gamma-D-Glu-L-Lys-D-Ala-D-Ala)](n+1)-di-trans,octa-cis-undecaprenyl diphosphate + di-trans,octa-cis-undecaprenyl diphosphate + H(+). It functions in the pathway cell wall biogenesis; peptidoglycan biosynthesis. Peptidoglycan polymerase that catalyzes glycan chain elongation from lipid-linked precursors. In Shewanella denitrificans (strain OS217 / ATCC BAA-1090 / DSM 15013), this protein is Biosynthetic peptidoglycan transglycosylase.